The sequence spans 520 residues: Cysteine--tRNA ligase (520 aa).

Cys-29 provides a ligand contact to Zn(2+). The short motif at 31 to 41 (PTVYNYPHLGN) is the 'HIGH' region element. Cys-227, His-252, and Glu-256 together coordinate Zn(2+). The 'KMSKS' region signature appears at 301–305 (KMSKS). Residue Lys-304 participates in ATP binding.

It belongs to the class-I aminoacyl-tRNA synthetase family. Monomer. It depends on Zn(2+) as a cofactor.

It localises to the cytoplasm. The catalysed reaction is tRNA(Cys) + L-cysteine + ATP = L-cysteinyl-tRNA(Cys) + AMP + diphosphate. In Treponema pallidum (strain Nichols), this protein is Cysteine--tRNA ligase (cysS).